The following is an 893-amino-acid chain: UPF0182 protein CLD_0809 (893 aa).

A run of 7 helical transmembrane segments spans residues 9–29 (IPLFIIILFIAFFNKIINFII), 49–69 (AIIILMIPIFIIFFISIWMYY), 94–114 (LFFIFNFIVSIFLAYIFSSSY), 154–174 (VIISLLLFLVITTFIAYFILE), 202–222 (LAIVSGLIILFISFGHLIKIW), 246–266 (FYKIIVVITLISSIVTLLSIV), and 273–293 (VSICIGITIFLIVSQNIASFL).

The protein belongs to the UPF0182 family.

Its subcellular location is the cell membrane. This Clostridium botulinum (strain Okra / Type B1) protein is UPF0182 protein CLD_0809.